Consider the following 111-residue polypeptide: Prothymosin alpha (111 aa).

Residue Met1 is modified to N-acetylmethionine. Positions 1–111 (MSDAAVDTSS…TKKQKTEEDD (111 aa)) are disordered. Residue Ser2 is modified to N-acetylserine; in Prothymosin alpha, N-terminally processed. Ser2 carries the phosphoserine modification. Residue Thr8 is modified to Phosphothreonine. A phosphoserine mark is found at Ser9 and Ser10. Phosphothreonine occurs at positions 13 and 14. Over residues 13–31 (TTKDLKEKKEVVEEAENGR) the composition is skewed to basic and acidic residues. N6-acetyllysine; alternate is present on Lys15. At Lys15 the chain carries N6-succinyllysine; alternate. Over residues 43-84 (ENGEQEADNEVDEEEEEGGEEEEEEEEGDGEEEDGDEDEEAE) the composition is skewed to acidic residues. The span at 101–111 (DTKKQKTEEDD) shows a compositional bias: basic and acidic residues. Thr102 is modified (phosphothreonine). Lys103 is subject to N6-acetyllysine; alternate. Lys103 participates in a covalent cross-link: Glycyl lysine isopeptide (Lys-Gly) (interchain with G-Cter in SUMO2); alternate. Thr107 carries the post-translational modification Phosphothreonine.

This sequence belongs to the pro/parathymosin family. As to quaternary structure, interacts with NUPR1; regulates apoptotic process. Post-translationally, covalently linked to a small RNA of about 20 nucleotides.

Its subcellular location is the nucleus. In terms of biological role, prothymosin alpha may mediate immune function by conferring resistance to certain opportunistic infections. This chain is Prothymosin alpha (Ptma), found in Mus musculus (Mouse).